A 637-amino-acid chain; its full sequence is DNA gyrase subunit B (637 aa).

Residues 420 to 534 (CEIYIVEGDS…EGHVFIAQPP (115 aa)) enclose the Toprim domain. Positions 426, 499, and 501 each coordinate Mg(2+).

This sequence belongs to the type II topoisomerase GyrB family. Heterotetramer, composed of two GyrA and two GyrB chains. In the heterotetramer, GyrA contains the active site tyrosine that forms a transient covalent intermediate with DNA, while GyrB binds cofactors and catalyzes ATP hydrolysis. Mg(2+) serves as cofactor. Requires Mn(2+) as cofactor. The cofactor is Ca(2+).

Its subcellular location is the cytoplasm. It catalyses the reaction ATP-dependent breakage, passage and rejoining of double-stranded DNA.. Its function is as follows. A type II topoisomerase that negatively supercoils closed circular double-stranded (ds) DNA in an ATP-dependent manner to modulate DNA topology and maintain chromosomes in an underwound state. Negative supercoiling favors strand separation, and DNA replication, transcription, recombination and repair, all of which involve strand separation. Also able to catalyze the interconversion of other topological isomers of dsDNA rings, including catenanes and knotted rings. Type II topoisomerases break and join 2 DNA strands simultaneously in an ATP-dependent manner. The polypeptide is DNA gyrase subunit B (Clostridium acetobutylicum (strain ATCC 824 / DSM 792 / JCM 1419 / IAM 19013 / LMG 5710 / NBRC 13948 / NRRL B-527 / VKM B-1787 / 2291 / W)).